The primary structure comprises 380 residues: Cytochrome b (380 aa).

A run of 4 helical transmembrane segments spans residues 34–54 (FGSL…LLAM), 78–99 (WLIR…YLHI), 114–134 (WNTG…GYVL), and 179–199 (FFAL…IHLT). Residues His-84 and His-98 each coordinate heme b. Residues His-183 and His-197 each coordinate heme b. Residue His-202 participates in a ubiquinone binding. The next 4 helical transmembrane spans lie at 227–247 (LKDA…ALFS), 289–309 (LGGV…PLLH), 321–341 (LSQL…WVGS), and 348–368 (FIII…ILFP).

Belongs to the cytochrome b family. As to quaternary structure, the cytochrome bc1 complex contains 11 subunits: 3 respiratory subunits (MT-CYB, CYC1 and UQCRFS1), 2 core proteins (UQCRC1 and UQCRC2) and 6 low-molecular weight proteins (UQCRH/QCR6, UQCRB/QCR7, UQCRQ/QCR8, UQCR10/QCR9, UQCR11/QCR10 and a cleavage product of UQCRFS1). This cytochrome bc1 complex then forms a dimer. Heme b serves as cofactor.

It localises to the mitochondrion inner membrane. In terms of biological role, component of the ubiquinol-cytochrome c reductase complex (complex III or cytochrome b-c1 complex) that is part of the mitochondrial respiratory chain. The b-c1 complex mediates electron transfer from ubiquinol to cytochrome c. Contributes to the generation of a proton gradient across the mitochondrial membrane that is then used for ATP synthesis. This chain is Cytochrome b (MT-CYB), found in Oceanites oceanicus (Wilson's storm petrel).